Consider the following 552-residue polypeptide: Indole-3-pyruvate decarboxylase (552 aa).

A thiamine diphosphate-binding site is contributed by Glu-52. Positions 385 to 466 are thiamine pyrophosphate binding; the sequence is TSAFGAIDLR…ILVLNNEGYT (82 aa). Residues Asp-435 and Asn-462 each coordinate Mg(2+).

It belongs to the TPP enzyme family. As to quaternary structure, homotetramer. The cofactor is a metal cation. Thiamine diphosphate is required as a cofactor.

It carries out the reaction indole-3-pyruvate + H(+) = indole-3-acetaldehyde + CO2. It participates in plant hormone metabolism; auxin biosynthesis. This chain is Indole-3-pyruvate decarboxylase (ipdC), found in Enterobacter cloacae.